The primary structure comprises 161 residues: MQDAITAVINASDVQGKYLDSSALDRLKSYFQSGELRVRAAATISANSALIVKEAVAKSLLYSDITRPGGNMYTTRRYAACIRDLEYYLRYATYAMLAGDTSILDERVLNGLKETYNSLGVPIGATVQAIQAIKEVTASLVGPDAGREMGVYLDYISSGLS.

Asparagine 71 carries the post-translational modification N4-methylasparagine. Residue cysteine 81 participates in (2R,3E)-phycocyanobilin binding.

It belongs to the phycobiliprotein family. In terms of assembly, heterodimer of an alpha and a beta chain. Contains one covalently linked phycocyanobilin chromophore.

The protein localises to the cellular thylakoid membrane. In terms of biological role, light-harvesting photosynthetic bile pigment-protein from the phycobiliprotein complex. Allophycocyanin has a maximum absorption at approximately 650 nanometers. The polypeptide is Allophycocyanin beta chain (apcB) (Synechococcus sp. (strain ATCC 27144 / PCC 6301 / SAUG 1402/1) (Anacystis nidulans)).